Here is a 202-residue protein sequence, read N- to C-terminus: UMP-CMP kinase 3 (202 aa).

24-29 (GSGKGT) serves as a coordination point for ATP. The NMP stretch occupies residues 44–73 (SAGDLLRAEIKSGSENGTMIQNMIKEGKIV). Residues Arg-50, 71–73 (KIV), and 98–101 (GFPR) each bind a ribonucleoside 5'-phosphate. Residue Asn-105 participates in CMP binding. Residues 136–144 (GRNQGREDD) are LID. Arg-137 is a binding site for ATP. Residues Arg-141 and Arg-152 each contribute to the a ribonucleoside 5'-phosphate site. Lys-180 serves as a coordination point for ATP.

In terms of assembly, monomer. The cofactor is Mg(2+).

Its subcellular location is the cytoplasm. It localises to the nucleus. It carries out the reaction CMP + ATP = CDP + ADP. It catalyses the reaction dCMP + ATP = dCDP + ADP. The catalysed reaction is UMP + ATP = UDP + ADP. In terms of biological role, catalyzes the phosphorylation of pyrimidine nucleoside monophosphates at the expense of ATP. Plays an important role in de novo pyrimidine nucleotide biosynthesis. Has preference for UMP and CMP as phosphate acceptors. Does not act on dCMP and dUMP. The chain is UMP-CMP kinase 3 (UMK3) from Arabidopsis thaliana (Mouse-ear cress).